Reading from the N-terminus, the 36-residue chain is Photosystem I reaction center subunit VIII (36 aa).

The helical transmembrane segment at 9-29 (ILVPLVGLIFPAIAMTSLFIY) threads the bilayer.

It belongs to the PsaI family.

The protein localises to the plastid. It localises to the chloroplast thylakoid membrane. In terms of biological role, may help in the organization of the PsaL subunit. This is Photosystem I reaction center subunit VIII from Tupiella akineta (Green alga).